Reading from the N-terminus, the 513-residue chain is cAMP-regulated M3R protein (513 aa).

To D.discoideum protein M3L.

The polypeptide is cAMP-regulated M3R protein (prtB) (Dictyostelium discoideum (Social amoeba)).